A 264-amino-acid polypeptide reads, in one-letter code: 5'-nucleotidase SurE (264 aa).

A divalent metal cation is bound by residues aspartate 10, aspartate 11, serine 43, and asparagine 99.

It belongs to the SurE nucleotidase family. A divalent metal cation is required as a cofactor.

It localises to the cytoplasm. It carries out the reaction a ribonucleoside 5'-phosphate + H2O = a ribonucleoside + phosphate. Its function is as follows. Nucleotidase that shows phosphatase activity on nucleoside 5'-monophosphates. The sequence is that of 5'-nucleotidase SurE from Methanococcus maripaludis (strain C7 / ATCC BAA-1331).